The primary structure comprises 466 residues: ATP synthase subunit beta (466 aa).

Gly155–Thr162 contacts ATP.

It belongs to the ATPase alpha/beta chains family. F-type ATPases have 2 components, CF(1) - the catalytic core - and CF(0) - the membrane proton channel. CF(1) has five subunits: alpha(3), beta(3), gamma(1), delta(1), epsilon(1). CF(0) has three main subunits: a(1), b(2) and c(9-12). The alpha and beta chains form an alternating ring which encloses part of the gamma chain. CF(1) is attached to CF(0) by a central stalk formed by the gamma and epsilon chains, while a peripheral stalk is formed by the delta and b chains.

It localises to the cell inner membrane. The catalysed reaction is ATP + H2O + 4 H(+)(in) = ADP + phosphate + 5 H(+)(out). Produces ATP from ADP in the presence of a proton gradient across the membrane. The catalytic sites are hosted primarily by the beta subunits. The polypeptide is ATP synthase subunit beta (Bordetella avium (strain 197N)).